Here is a 215-residue protein sequence, read N- to C-terminus: Small ribosomal subunit protein eS1 (215 aa).

A disordered region spans residues 195–215; it reads SGMQEPQKNEPAPGGEAIAQN.

Belongs to the eukaryotic ribosomal protein eS1 family.

The polypeptide is Small ribosomal subunit protein eS1 (Thermoplasma acidophilum (strain ATCC 25905 / DSM 1728 / JCM 9062 / NBRC 15155 / AMRC-C165)).